A 319-amino-acid polypeptide reads, in one-letter code: Putative peptide permease protein BRA0408/BS1330_II0405 (319 aa).

The next 6 membrane-spanning stretches (helical) occupy residues 9–29 (LLIG…LLQL), 102–122 (LLLM…TGII), 138–158 (LALL…LYVF), 182–202 (LLRH…ALIM), 242–262 (LPVV…AIFI), and 284–304 (YPVI…VNIL). Residues 98-305 (IGPTLLLMAA…ACVIIVNILT (208 aa)) form the ABC transmembrane type-1 domain.

The protein belongs to the binding-protein-dependent transport system permease family. In terms of assembly, the complex is composed of two ATP-binding proteins (BRA0404 and BRA0405), two transmembrane proteins (BRA0407 and BRA0408) and a solute-binding protein (BRA0409).

It localises to the cell inner membrane. Functionally, probably part of an ABC transporter complex that could be involved in peptide import. Probably responsible for the translocation of the substrate across the membrane. This chain is Putative peptide permease protein BRA0408/BS1330_II0405, found in Brucella suis biovar 1 (strain 1330).